Reading from the N-terminus, the 1741-residue chain is S-layer protein (1741 aa).

The segment covering 894–904 (SFTSDSANGSG) has biased composition (polar residues). Residues 894–913 (SFTSDSANGSGHSVEGGTGD) are disordered.

In terms of processing, glycosylated.

Its subcellular location is the secreted. The protein localises to the cell wall. It localises to the S-layer. Its function is as follows. S-layer protein. The S-layer is a paracrystalline mono-layered assembly of proteins which coats the surface of bacteria. Under laboratory conditions, has a supportive but not a critical role in the function of the cyanobacterium. Shows no apparent hemolytic activity against sheep erythrocytes, however, a slight hemolytic activity is detected during the conformational change caused by the rebinding of Ca(2+). The chain is S-layer protein from Synechocystis sp. (strain ATCC 27184 / PCC 6803 / Kazusa).